The sequence spans 128 residues: Ribonuclease P protein component (128 aa).

The protein belongs to the RnpA family. As to quaternary structure, consists of a catalytic RNA component (M1 or rnpB) and a protein subunit.

It catalyses the reaction Endonucleolytic cleavage of RNA, removing 5'-extranucleotides from tRNA precursor.. Its function is as follows. RNaseP catalyzes the removal of the 5'-leader sequence from pre-tRNA to produce the mature 5'-terminus. It can also cleave other RNA substrates such as 4.5S RNA. The protein component plays an auxiliary but essential role in vivo by binding to the 5'-leader sequence and broadening the substrate specificity of the ribozyme. The sequence is that of Ribonuclease P protein component from Prochlorococcus marinus (strain AS9601).